The sequence spans 425 residues: Imidazolonepropionase (425 aa).

Fe(3+) is bound by residues histidine 82 and histidine 84. Residues histidine 82 and histidine 84 each coordinate Zn(2+). 4-imidazolone-5-propanoate is bound by residues arginine 91, tyrosine 154, and histidine 187. Tyrosine 154 contributes to the N-formimidoyl-L-glutamate binding site. Residue histidine 253 participates in Fe(3+) binding. Histidine 253 is a Zn(2+) binding site. Glutamate 256 serves as a coordination point for 4-imidazolone-5-propanoate. Residue aspartate 328 participates in Fe(3+) binding. Aspartate 328 is a Zn(2+) binding site. The N-formimidoyl-L-glutamate site is built by asparagine 330 and glycine 332. 4-imidazolone-5-propanoate is bound at residue serine 333.

This sequence belongs to the metallo-dependent hydrolases superfamily. HutI family. The cofactor is Zn(2+). Fe(3+) is required as a cofactor.

The protein localises to the cytoplasm. The enzyme catalyses 4-imidazolone-5-propanoate + H2O = N-formimidoyl-L-glutamate. It participates in amino-acid degradation; L-histidine degradation into L-glutamate; N-formimidoyl-L-glutamate from L-histidine: step 3/3. Its function is as follows. Catalyzes the hydrolytic cleavage of the carbon-nitrogen bond in imidazolone-5-propanoate to yield N-formimidoyl-L-glutamate. It is the third step in the universal histidine degradation pathway. This chain is Imidazolonepropionase, found in Symbiobacterium thermophilum (strain DSM 24528 / JCM 14929 / IAM 14863 / T).